The sequence spans 289 residues: Probable acetolactate synthase small subunit (289 aa).

Serine 34 bears the Phosphoserine mark. Residues 72-149 (VFNCLVQNEP…AVLDYTGTSM (78 aa)) form the ACT domain.

This sequence belongs to the acetolactate synthase small subunit family.

It is found in the cytoplasm. It participates in amino-acid biosynthesis; L-isoleucine biosynthesis; L-isoleucine from 2-oxobutanoate: step 1/4. Its pathway is amino-acid biosynthesis; L-valine biosynthesis; L-valine from pyruvate: step 1/4. Stimulates activity of the acetolactate synthase catalytic subunit ilv1. This chain is Probable acetolactate synthase small subunit, found in Schizosaccharomyces pombe (strain 972 / ATCC 24843) (Fission yeast).